We begin with the raw amino-acid sequence, 167 residues long: Transcription antitermination protein NusB (167 aa).

The segment at 1–32 is disordered; it reads MSDTPETGKPAAGTKPAARTEAKAPPKSARRR.

This sequence belongs to the NusB family.

In terms of biological role, involved in transcription antitermination. Required for transcription of ribosomal RNA (rRNA) genes. Binds specifically to the boxA antiterminator sequence of the ribosomal RNA (rrn) operons. This chain is Transcription antitermination protein NusB, found in Cupriavidus pinatubonensis (strain JMP 134 / LMG 1197) (Cupriavidus necator (strain JMP 134)).